A 340-amino-acid polypeptide reads, in one-letter code: uncharacterized protein (340 aa).

The first 25 residues, 1 to 25 (MLGIRAMLVMLDYYWIQLITNNDTR), serve as a signal peptide directing secretion. The Lumenal segment spans residues 26 to 225 (SNNTDTIFVS…RRYMYLFSVS (200 aa)). Asn27, Asn54, Asn57, Asn68, Asn72, Asn78, Asn83, Asn107, Asn118, Asn146, Asn173, and Asn180 each carry an N-linked (GlcNAc...) asparagine; by host glycan. A helical membrane pass occupies residues 226 to 246 (CAGITGTVSIILVSLSLLILI). The Cytoplasmic segment spans residues 247–340 (CYYRCGRLLI…PMHMVVCMPA (94 aa)).

The protein belongs to the HHV-5 UL20 protein family.

It is found in the host endoplasmic reticulum membrane. This is an uncharacterized protein from Human cytomegalovirus (strain AD169) (HHV-5).